The chain runs to 503 residues: Cytochrome P450 7A1 (503 aa).

The chain crosses the membrane as a helical span at residues 4–24 (ISLIWGIAVVVSCCIWFIIGI). Residue Cys-444 coordinates heme.

It belongs to the cytochrome P450 family. Requires heme as cofactor.

It localises to the endoplasmic reticulum membrane. The protein resides in the microsome membrane. It catalyses the reaction cholesterol + reduced [NADPH--hemoprotein reductase] + O2 = 7alpha-hydroxycholesterol + oxidized [NADPH--hemoprotein reductase] + H2O + H(+). The catalysed reaction is 4beta-hydroxycholesterol + reduced [NADPH--hemoprotein reductase] + O2 = 4beta,7alpha-dihydroxycholesterol + oxidized [NADPH--hemoprotein reductase] + H2O + H(+). The enzyme catalyses lathosterol + reduced [NADPH--hemoprotein reductase] + O2 = 7alpha,8alpha-epoxy-5alpha-cholestan-3beta-ol + oxidized [NADPH--hemoprotein reductase] + H2O + H(+). It carries out the reaction lathosterol + reduced [NADPH--hemoprotein reductase] + O2 = 5alpha-cholestan-7-oxo-3beta-ol + oxidized [NADPH--hemoprotein reductase] + H2O + H(+). It catalyses the reaction 7-dehydrocholesterol + reduced [NADPH--hemoprotein reductase] + O2 = 7-oxocholesterol + oxidized [NADPH--hemoprotein reductase] + H2O + H(+). The catalysed reaction is (24S)-hydroxycholesterol + reduced [NADPH--hemoprotein reductase] + O2 = (24S)-7alpha-dihydroxycholesterol + oxidized [NADPH--hemoprotein reductase] + H2O + H(+). The enzyme catalyses (24R)-hydroxycholesterol + reduced [NADPH--hemoprotein reductase] + O2 = (24R)-7alpha-dihydroxycholesterol + oxidized [NADPH--hemoprotein reductase] + H2O + H(+). It participates in lipid metabolism; bile acid biosynthesis. It functions in the pathway steroid metabolism; cholesterol degradation. A cytochrome P450 monooxygenase involved in the metabolism of endogenous cholesterol and its oxygenated derivatives (oxysterols). Mechanistically, uses molecular oxygen inserting one oxygen atom into a substrate, and reducing the second into a water molecule, with two electrons provided by NADPH via cytochrome P450 reductase (CPR; NADPH-ferrihemoprotein reductase). Functions as a critical regulatory enzyme of bile acid biosynthesis and cholesterol homeostasis. Catalyzes the hydroxylation of carbon hydrogen bond at 7-alpha position of cholesterol, a rate-limiting step in cholesterol catabolism and bile acid biosynthesis. 7-alpha hydroxylates several oxysterols, including 4beta-hydroxycholesterol and 24-hydroxycholesterol. Catalyzes the oxidation of the 7,8 double bond of 7-dehydrocholesterol and lathosterol with direct and predominant formation of the 7-keto derivatives. This is Cytochrome P450 7A1 from Mus musculus (Mouse).